Consider the following 126-residue polypeptide: 5-carboxymethyl-2-hydroxymuconate Delta-isomerase (126 aa).

Pro-2 acts as the Proton acceptor; via imino nitrogen in catalysis.

Homotrimer.

It catalyses the reaction (2E,4Z)-5-hydroxypenta-2,4-diene-1,2,5-tricarboxylate = (3E,5R)-5-carboxy-2-oxohept-3-enedioate. It participates in aromatic compound metabolism; 4-hydroxyphenylacetate degradation; pyruvate and succinate semialdehyde from 4-hydroxyphenylacetate: step 4/7. In terms of biological role, transforms 5-carboxymethyl-2-hydroxy-muconic acid (CHM) into 5-oxo-pent-3-ene-1,2,5-tricarboxylic acid (OPET). In Escherichia coli, this protein is 5-carboxymethyl-2-hydroxymuconate Delta-isomerase (hpcD).